Reading from the N-terminus, the 363-residue chain is MTAVQKIKVLCVDDSALIRSLMTEIINSQPDMTVCATAPDPLVARELIKQHNPDVLTLDVEMPRMDGLDFLEKLMRLRPMPVVMVSSLTERGSEITLRALELGAVDFVTKPRVGIRDGMLDYAEKLADKIRAASRARVRQAPQPQAVARAADSHPAAPMINNPLVSTEKLIIIGASTGGTEAIREVLTPLPPDAPAVLIAQHMPPGFTKSFAQRLNGLCRIAVKEAEHGERVLPGHAYIAPGHAHLLLARSGANYIAQLSDEPPVNRHRPSVDVLFRSAATHAGKNAIGVILTGMGRDGAAGLLEMKRAGAHTFAQDEASCIVFGMPREAIALGGADEIVPLAEMSRRVMARLATMGDRVQRV.

The region spanning 8-125 is the Response regulatory domain; sequence KVLCVDDSAL…RDGMLDYAEK (118 aa). Residue aspartate 59 is modified to 4-aspartylphosphate. A CheB-type methylesterase domain is found at 164–356; that stretch reads LVSTEKLIII…RRVMARLATM (193 aa). Active-site residues include serine 176, histidine 202, and aspartate 298.

Belongs to the CheB family. Phosphorylated by CheA. Phosphorylation of the N-terminal regulatory domain activates the methylesterase activity.

Its subcellular location is the cytoplasm. It catalyses the reaction [protein]-L-glutamate 5-O-methyl ester + H2O = L-glutamyl-[protein] + methanol + H(+). The enzyme catalyses L-glutaminyl-[protein] + H2O = L-glutamyl-[protein] + NH4(+). Its function is as follows. Involved in chemotaxis. Part of a chemotaxis signal transduction system that modulates chemotaxis in response to various stimuli. Catalyzes the demethylation of specific methylglutamate residues introduced into the chemoreceptors (methyl-accepting chemotaxis proteins or MCP) by CheR. Also mediates the irreversible deamidation of specific glutamine residues to glutamic acid. The polypeptide is Protein-glutamate methylesterase/protein-glutamine glutaminase 3 (Burkholderia lata (strain ATCC 17760 / DSM 23089 / LMG 22485 / NCIMB 9086 / R18194 / 383)).